The following is a 186-amino-acid chain: DNA-directed RNA polymerase 22 kDa subunit (186 aa).

Belongs to the poxviridae DNA-directed RNA polymerase 22 kDa subunit family. As to quaternary structure, the DNA-dependent RNA polymerase used for intermediate and late genes expression consists of eight subunits Rpo30/OPG66, Rpo7/OPG90, Rpo22/OPG103, Rpo147/OPG105, Rpo18/OPG119, Rpo19/OPG131, Rpo132/OPG151 and Rpo35/OPG156. The same holoenzyme, with the addition of the transcription-specificity factor OPG109, is used for early gene expression.

The protein localises to the virion. It catalyses the reaction RNA(n) + a ribonucleoside 5'-triphosphate = RNA(n+1) + diphosphate. Functionally, part of the DNA-dependent RNA polymerase which catalyzes the transcription of viral DNA into RNA using the four ribonucleoside triphosphates as substrates. Responsible for the transcription of early, intermediate and late genes. DNA-dependent RNA polymerase associates with the early transcription factor (ETF), itself composed of OPG118 and OPG133, thereby allowing the early genes transcription. Late transcription, and probably also intermediate transcription, require newly synthesized RNA polymerase. This is DNA-directed RNA polymerase 22 kDa subunit (OPG103) from Vertebrata (FPV).